Here is a 423-residue protein sequence, read N- to C-terminus: CinA-like protein (423 aa).

This sequence belongs to the CinA family.

The chain is CinA-like protein from Chlorobium phaeobacteroides (strain DSM 266 / SMG 266 / 2430).